The primary structure comprises 57 residues: Cecropin-A (57 aa).

Residues 1 to 21 (IFFFVFACLLALSAVSAAPEP) form the signal peptide.

The protein belongs to the cecropin family.

Its subcellular location is the secreted. Cecropins have lytic and antibacterial activity against several Gram-positive and Gram-negative bacteria. This is Cecropin-A (CECA) from Spodoptera litura (Asian cotton leafworm).